A 1414-amino-acid chain; its full sequence is DNA-directed RNA polymerase subunit beta' (1414 aa).

Zn(2+) contacts are provided by Cys-70, Cys-72, Cys-85, and Cys-88. Residues Asp-460, Asp-462, and Asp-464 each contribute to the Mg(2+) site. Zn(2+)-binding residues include Cys-819, Cys-893, Cys-900, and Cys-903. Residues 1391–1414 are disordered; sequence AEEAFDFGTPSAPAEEPQQHPAAE. The span at 1400–1414 shows a compositional bias: low complexity; the sequence is PSAPAEEPQQHPAAE.

It belongs to the RNA polymerase beta' chain family. The RNAP catalytic core consists of 2 alpha, 1 beta, 1 beta' and 1 omega subunit. When a sigma factor is associated with the core the holoenzyme is formed, which can initiate transcription. Requires Mg(2+) as cofactor. Zn(2+) serves as cofactor.

The enzyme catalyses RNA(n) + a ribonucleoside 5'-triphosphate = RNA(n+1) + diphosphate. DNA-dependent RNA polymerase catalyzes the transcription of DNA into RNA using the four ribonucleoside triphosphates as substrates. In Burkholderia lata (strain ATCC 17760 / DSM 23089 / LMG 22485 / NCIMB 9086 / R18194 / 383), this protein is DNA-directed RNA polymerase subunit beta'.